The sequence spans 612 residues: Methionine--tRNA ligase (612 aa).

The 'HIGH' region motif lies at 12 to 22 (PYANGPRHIGH). Positions 144, 147, 157, and 160 each coordinate Zn(2+). Residues 350–354 (KFSSS) carry the 'KMSKS' region motif. S353 serves as a coordination point for ATP. A disordered region spans residues 580-612 (IQPGTQLSKPKPLFPKLDPELAETGPEWAPVQK).

This sequence belongs to the class-I aminoacyl-tRNA synthetase family. MetG type 1 subfamily. As to quaternary structure, monomer. Zn(2+) is required as a cofactor.

It is found in the cytoplasm. The enzyme catalyses tRNA(Met) + L-methionine + ATP = L-methionyl-tRNA(Met) + AMP + diphosphate. In terms of biological role, is required not only for elongation of protein synthesis but also for the initiation of all mRNA translation through initiator tRNA(fMet) aminoacylation. This Corynebacterium jeikeium (strain K411) protein is Methionine--tRNA ligase.